Consider the following 434-residue polypeptide: Galactofuranosyl glycosyltransferase (434 aa).

Residues Met1–Arg18 lie on the Cytoplasmic side of the membrane. A helical; Signal-anchor for type II membrane protein membrane pass occupies residues Val19–Tyr38. N-linked (GlcNAc...) asparagine glycosylation is found at Asn39, Asn100, Asn162, and Asn388. At Asn39–Ser434 the chain is on the lumenal side.

The protein belongs to the glycosyltransferase 2 family.

Its subcellular location is the endoplasmic reticulum membrane. It participates in glycolipid biosynthesis; glycosylphosphatidylinositol-anchor biosynthesis. Functionally, glycosyltransferase that may be responsible for the addition of galactofuranosyl residues to the nascent lipophosphoglycan (LPG) chain. It could alternatively be involved in the synthesis of the galactofuranosyl donor. In Leishmania donovani, this protein is Galactofuranosyl glycosyltransferase (LPG1).